We begin with the raw amino-acid sequence, 1433 residues long: DNA-directed RNA polymerase subunit beta' (1433 aa).

Zn(2+)-binding residues include Cys-66, Cys-68, Cys-81, and Cys-84. The Mg(2+) site is built by Asp-474, Asp-476, and Asp-478. Zn(2+) is bound by residues Cys-823, Cys-897, Cys-904, and Cys-907.

The protein belongs to the RNA polymerase beta' chain family. In terms of assembly, the RNAP catalytic core consists of 2 alpha, 1 beta, 1 beta' and 1 omega subunit. When a sigma factor is associated with the core the holoenzyme is formed, which can initiate transcription. Mg(2+) serves as cofactor. Requires Zn(2+) as cofactor.

The enzyme catalyses RNA(n) + a ribonucleoside 5'-triphosphate = RNA(n+1) + diphosphate. In terms of biological role, DNA-dependent RNA polymerase catalyzes the transcription of DNA into RNA using the four ribonucleoside triphosphates as substrates. This chain is DNA-directed RNA polymerase subunit beta', found in Amoebophilus asiaticus (strain 5a2).